We begin with the raw amino-acid sequence, 132 residues long: MAVTDPIGDLITRIRNAQMRRKDKTSTPGSRLRASVLEVLRSEGYIRGFTATDHGNGRTEFEIELKYFDGVPVIREIARVSKPGRRVYASVKNLPRVANGLGIAVVSTPQGVMADHEARDKNVGGEVLCTVF.

Belongs to the universal ribosomal protein uS8 family. Part of the 30S ribosomal subunit. Contacts proteins S5 and S12.

Its function is as follows. One of the primary rRNA binding proteins, it binds directly to 16S rRNA central domain where it helps coordinate assembly of the platform of the 30S subunit. In Xanthobacter autotrophicus (strain ATCC BAA-1158 / Py2), this protein is Small ribosomal subunit protein uS8.